A 735-amino-acid chain; its full sequence is MELRFPRFSQGLAQDPTTRRIWFGIATAHDFESHDDITEERLYQNIFASHFGQLAIIFLWTSGNLFHVAWQGNFESWIQDPLHVRPIAHAIWDPHFGQPAVEAFTRGGAAGPVNIAYSGVYQWWYTIGLRTNEDLYTGALFLLFLSTLSLIGGWLHLQPKWKPSLSWFKNAESRLNHHLSGLFGVSSLAWTGHLVHVAIPGSSRGEYVRWNNFLDVLPYPQGLGPLLTGQWNLYAQNPDSSNHLFGTTQGAGTAILTLLGGFHPQTQSLWLTDIAHHHLAIAFIFLIAGHMYRTNFGIGHSIKDLLEAHTPPGGRLGRGHKGLYDTINNSIHFQLGLALASLGVITSLVAQHMYSLPAYAFIAQDFTTQAALYTHHQYIAGFIMTGAFAHGAIFFIRDYNPEQNEDNVLARMLDHKEAIISHLSWASLFLGFHTLGPYVHNDVMLAFGTPEKQILIEPIFAQWIQSAHGKTTYGFDILLSSTNGPTFNAGRNIWLPGWLNAVNENSNSLFLTIGPGDFLVHHAIALGLHTTTLILVKGALDARGSKLMPDKKDFGYSFPCDGPGRGGTCDISAWDAFYLAVFWMLNTIGWVTFYWHWKHITLWQGNVSQFNESSTYLMGWLRDYLWLNSSQLINGYNPFGMNSLSVWAWMFLFGHLVWATGFMFLISWRGYWQELIETLAWAHERTPLANLIRWRDKPVALSVVQARLVGLAHFSVGYIFTYAAFLIASTSGKFG.

8 consecutive transmembrane segments (helical) span residues 46 to 69, 135 to 158, 175 to 199, 274 to 292, 331 to 354, 370 to 396, 418 to 440, and 518 to 536; these read IFAS…FHVA, LYTG…LHLQ, LNHH…HVAI, IAHH…GHMY, IHFQ…QHMY, AALY…IFFI, AIIS…PYVH, and FLVH…LILV. 2 residues coordinate [4Fe-4S] cluster: Cys-560 and Cys-569. 2 helical membrane passes run 576-597 and 644-666; these read AFYL…YWHW and LSVW…MFLI. Chlorophyll a-binding residues include His-655, Met-663, and Tyr-671. Trp-672 is a phylloquinone binding site. The helical transmembrane segment at 708–728 threads the bilayer; that stretch reads LVGLAHFSVGYIFTYAAFLIA.

It belongs to the PsaA/PsaB family. As to quaternary structure, the PsaA/B heterodimer binds the P700 chlorophyll special pair and subsequent electron acceptors. PSI consists of a core antenna complex that captures photons, and an electron transfer chain that converts photonic excitation into a charge separation. The eukaryotic PSI reaction center is composed of at least 11 subunits. P700 is a chlorophyll a/chlorophyll a' dimer, A0 is one or more chlorophyll a, A1 is one or both phylloquinones and FX is a shared 4Fe-4S iron-sulfur center. is required as a cofactor.

The protein resides in the plastid. It localises to the chloroplast thylakoid membrane. It carries out the reaction reduced [plastocyanin] + hnu + oxidized [2Fe-2S]-[ferredoxin] = oxidized [plastocyanin] + reduced [2Fe-2S]-[ferredoxin]. In terms of biological role, psaA and PsaB bind P700, the primary electron donor of photosystem I (PSI), as well as the electron acceptors A0, A1 and FX. PSI is a plastocyanin-ferredoxin oxidoreductase, converting photonic excitation into a charge separation, which transfers an electron from the donor P700 chlorophyll pair to the spectroscopically characterized acceptors A0, A1, FX, FA and FB in turn. Oxidized P700 is reduced on the lumenal side of the thylakoid membrane by plastocyanin. This is Photosystem I P700 chlorophyll a apoprotein A2 from Zea mays (Maize).